The sequence spans 375 residues: MAHSALSQVSVAVPLQTDSSFRRSTFKATSITFSDRSSWISMPPIDLKAAPSRNQHIVCMSVQQASKAKVSVSPLSLEDAKEPPLNIYKPKEPYTATIVSVERLVGPKAPGETCHIVIDHDGNLPYWEGQSYGVIPPGENPKKPGNPHNVRLYLIASTRYGDSFDGKTASLCVRRAVYYDPETGKEDPSKNGVCSNFLCDSKPGDKVKITGPSGKIMLLPEEIPNATHIMIGTGTGVAPFRGYLRRMFMESVPTKFNGLAWLFLGVANTDSLLYDDEFTKYLNDYPGNFRYDRALSREQKNNKGGKMYVQDKIEEYSDEIFKLLDEGAHIYFCGLKGMMPGIQDTLKRVAERRGESWEQKLSQLKKNKQWHVEVY.

The N-terminal 60 residues, M1–M60, are a transit peptide targeting the chloroplast. Residues K91–L219 enclose the FAD-binding FR-type domain. Residues R151–L154, C172–R174, Y178, V193–S195, and T235 each bind FAD. R174 lines the NADP(+) pocket. Residues T235, V266 to A267, S296 to R297, K306, G334 to L335, and E373 each bind NADP(+).

It belongs to the ferredoxin--NADP reductase type 1 family. Requires FAD as cofactor.

It localises to the plastid. It is found in the chloroplast. It carries out the reaction 2 reduced [2Fe-2S]-[ferredoxin] + NADP(+) + H(+) = 2 oxidized [2Fe-2S]-[ferredoxin] + NADPH. Its pathway is energy metabolism; photosynthesis. In terms of biological role, may play a key role in regulating the relative amounts of cyclic and non-cyclic electron flow to meet the demands of the plant for ATP and reducing power. Is involved in nitrate assimilation. This Nicotiana tabacum (Common tobacco) protein is Ferredoxin--NADP reductase, root-type isozyme, chloroplastic.